The following is a 670-amino-acid chain: uncharacterized protein (670 aa).

A run of 10 helical transmembrane segments spans residues 23 to 42, 47 to 69, 76 to 98, 118 to 140, 153 to 170, 381 to 403, 410 to 432, 437 to 454, 461 to 483, and 493 to 510; these read YALR…YYLN, YWAM…SKSL, LLGA…FFLL, VAYA…VNIT, VCEV…MMIL, QWDA…SAVA, SLLM…GLMV, LWQF…MQLL, FAAL…NPPV, and NLAK…FAIL.

Belongs to the aromatic acid exporter ArAE (TC 2.A.85) family.

The protein resides in the cell membrane. This is an uncharacterized protein from Escherichia coli O157:H7.